The chain runs to 499 residues: Lysine--tRNA ligase (499 aa).

The Mg(2+) site is built by Glu408 and Glu415.

Belongs to the class-II aminoacyl-tRNA synthetase family. Homodimer. Mg(2+) is required as a cofactor.

It localises to the cytoplasm. It carries out the reaction tRNA(Lys) + L-lysine + ATP = L-lysyl-tRNA(Lys) + AMP + diphosphate. The sequence is that of Lysine--tRNA ligase from Bacillus cereus (strain AH820).